Consider the following 686-residue polypeptide: MAM domain-containing protein 2 (686 aa).

A signal peptide spans 1–18; that stretch reads MLLRGVLLALQALQLAGA. MAM domains follow at residues 24–169, 168–329, 340–498, and 507–666; these read GSCA…YCIE, IECD…HCQN, ASCN…SCSS, and GECT…PCGE. N-linked (GlcNAc...) asparagine glycans are attached at residues asparagine 134 and asparagine 329. Disordered stretches follow at residues 521–543 and 665–686; these read EKRN…TGPK and GEME…EIEY. Residue asparagine 524 is glycosylated (N-linked (GlcNAc...) asparagine).

Post-translationally, O-glycosylated.

Its subcellular location is the secreted. The protein resides in the extracellular space. The protein localises to the extracellular matrix. This is MAM domain-containing protein 2 (MAMDC2) from Homo sapiens (Human).